Reading from the N-terminus, the 344-residue chain is Laforin, isoform 9 (344 aa).

4 disordered regions span residues 1 to 44 (MHPK…PGPG), 58 to 134 (GGGA…PRGH), 158 to 188 (PAPG…RRAS), and 320 to 344 (SLKK…QCAT). Residues 77 to 88 (AARAGALGAARC) are compositionally biased toward low complexity. Positions 101–131 (RGPGPAGAGPVARGGGAGGRGGGAGRGGAGP) are enriched in gly residues. Residues 179–188 (RPRRPRRRAS) show a composition bias toward basic residues.

In terms of assembly, interacts with isoform 1 and isoform 2.

It localises to the nucleus. This Homo sapiens (Human) protein is Laforin, isoform 9.